The chain runs to 332 residues: Cell division protein ZipA (332 aa).

Over 1 to 6 the chain is Periplasmic; sequence MMQDLR. Residues 7-27 form a helical membrane-spanning segment; the sequence is LILIVVGAIAIIALLLHGLWT. Residues 28-332 lie on the Cytoplasmic side of the membrane; it reads SRKERSSLFR…RLREVLENNA (305 aa). 2 stretches are compositionally biased toward basic and acidic residues: residues 34 to 51 and 61 to 72; these read SLFRDRPAKRSKKEREQS and GEVRVRSAHPED. The tract at residues 34-184 is disordered; the sequence is SLFRDRPAKR…PAVAHEPQPA (151 aa). The span at 98–107 shows a compositional bias: low complexity; that stretch reads PAPRAVQPAA. Over residues 121 to 136 the composition is skewed to acidic residues; that stretch reads DDILLDNYAQEEDDEP. A compositionally biased stretch (low complexity) spans 155–171; the sequence is PAAEPAFHAEPAHQPQP.

Belongs to the ZipA family. Interacts with FtsZ via their C-terminal domains.

The protein resides in the cell inner membrane. Functionally, essential cell division protein that stabilizes the FtsZ protofilaments by cross-linking them and that serves as a cytoplasmic membrane anchor for the Z ring. Also required for the recruitment to the septal ring of downstream cell division proteins. This chain is Cell division protein ZipA, found in Serratia proteamaculans (strain 568).